The chain runs to 327 residues: Nucleotide-binding protein Mflv_3714 (327 aa).

Residues 1–22 (MTRQGMRDDLRGEADSVVHDGT) show a composition bias toward basic and acidic residues. Residues 1–29 (MTRQGMRDDLRGEADSVVHDGTDDIDNEN) are disordered. 50 to 57 (GLSGAGRG) contributes to the ATP binding site. Position 101–104 (101–104 (DVRS)) interacts with GTP.

Belongs to the RapZ-like family.

Its function is as follows. Displays ATPase and GTPase activities. The chain is Nucleotide-binding protein Mflv_3714 from Mycolicibacterium gilvum (strain PYR-GCK) (Mycobacterium gilvum (strain PYR-GCK)).